Consider the following 210-residue polypeptide: MTKGILGKKIGMTQVFDEAGKVVPVTVIEAGPCVVVQKKTVEKDGYAAIQVGFEDIKETKLNKPLRGHFAKHGVKPKRYLRELRLKDADKYEVGQEIRVDIFSPGERVDVTGISKAKGFQGVIKRHGQQRGPMSHGSMYHRRVGSMGSNTFPARTFPGKKMPGRMGGQRVTVLNLQVVKVDPERNLLLVKGSVPGNKNSLLIIRDSVKSK.

The protein belongs to the universal ribosomal protein uL3 family. As to quaternary structure, part of the 50S ribosomal subunit. Forms a cluster with proteins L14 and L19.

Functionally, one of the primary rRNA binding proteins, it binds directly near the 3'-end of the 23S rRNA, where it nucleates assembly of the 50S subunit. The polypeptide is Large ribosomal subunit protein uL3 (Caldicellulosiruptor saccharolyticus (strain ATCC 43494 / DSM 8903 / Tp8T 6331)).